The following is a 283-amino-acid chain: Polyamine aminopropyltransferase (283 aa).

Residues T5–S238 form the PABS domain. S-methyl-5'-thioadenosine is bound at residue Q32. 2 residues coordinate spermidine: H63 and D87. Residues E107 and D139–G140 each bind S-methyl-5'-thioadenosine. The Proton acceptor role is filled by D158. D158 to D161 contributes to the spermidine binding site.

This sequence belongs to the spermidine/spermine synthase family. As to quaternary structure, homodimer or homotetramer.

It localises to the cytoplasm. The enzyme catalyses S-adenosyl 3-(methylsulfanyl)propylamine + putrescine = S-methyl-5'-thioadenosine + spermidine + H(+). Its pathway is amine and polyamine biosynthesis; spermidine biosynthesis; spermidine from putrescine: step 1/1. Functionally, catalyzes the irreversible transfer of a propylamine group from the amino donor S-adenosylmethioninamine (decarboxy-AdoMet) to putrescine (1,4-diaminobutane) to yield spermidine. This chain is Polyamine aminopropyltransferase, found in Prochlorococcus marinus (strain MIT 9215).